A 695-amino-acid chain; its full sequence is Probable serine/threonine-protein kinase DDB_G0279405 (695 aa).

Disordered regions lie at residues 119–138 (IVAQ…PQPQ) and 149–192 (QIPT…KRHK). The span at 124-138 (QPQPQPQPQPQPQPQ) shows a compositional bias: pro residues. Residues 149 to 160 (QIPTTPPQQISQ) are compositionally biased toward low complexity. The span at 161 to 173 (FNITGNKSPSSIG) shows a compositional bias: polar residues. The 262-residue stretch at 201-462 (YVFVRKLGKG…IAEIKSHKWT (262 aa)) folds into the Protein kinase domain. Residues 207-215 (LGKGTFGKV) and lysine 230 each bind ATP. The active-site Proton acceptor is the aspartate 329. The interval 491–580 (TDHTIKPSDN…NQNQNNNNNS (90 aa)) is disordered. Over residues 510–528 (LSSSSGGESSGIIGSSNES) the composition is skewed to low complexity. The span at 529 to 541 (KSMYNNVNSKQKI) shows a compositional bias: polar residues. Residues 542 to 580 (QNQNQNQNQNQNQNQNQNQNQNHNQNQNQNQNQNNNNNS) are compositionally biased toward low complexity.

This sequence belongs to the protein kinase superfamily. Ser/Thr protein kinase family.

It carries out the reaction L-seryl-[protein] + ATP = O-phospho-L-seryl-[protein] + ADP + H(+). The enzyme catalyses L-threonyl-[protein] + ATP = O-phospho-L-threonyl-[protein] + ADP + H(+). This is Probable serine/threonine-protein kinase DDB_G0279405 from Dictyostelium discoideum (Social amoeba).